A 225-amino-acid polypeptide reads, in one-letter code: Uridylate kinase (225 aa).

Glycine 9–serine 10 contributes to the ATP binding site. Glycine 44 contacts UMP. Positions 45 and 49 each coordinate ATP. Residues aspartate 66 and threonine 114 to threonine 120 each bind UMP. ATP is bound by residues threonine 140, asparagine 141, tyrosine 146, and aspartate 149.

The protein belongs to the UMP kinase family. Homohexamer.

Its subcellular location is the cytoplasm. The catalysed reaction is UMP + ATP = UDP + ADP. It participates in pyrimidine metabolism; CTP biosynthesis via de novo pathway; UDP from UMP (UMPK route): step 1/1. Its activity is regulated as follows. Inhibited by UTP. Its function is as follows. Catalyzes the reversible phosphorylation of UMP to UDP. The protein is Uridylate kinase of Thermococcus kodakarensis (strain ATCC BAA-918 / JCM 12380 / KOD1) (Pyrococcus kodakaraensis (strain KOD1)).